Consider the following 1489-residue polypeptide: ZEB2-regulated ABC transporter 1 (1489 aa).

The interval 1 to 55 (MALPEANMSSTRSEQSSRSHDTIVGNEQPHSEKPAASAPGDQMSSDDEDEGPQTE) is disordered. N-linked (GlcNAc...) asparagine glycosylation is present at asparagine 7. The segment covering 44-53 (SSDDEDEGPQ) has biased composition (acidic residues). 5 N-linked (GlcNAc...) asparagine glycosylation sites follow: asparagine 70, asparagine 73, asparagine 118, asparagine 332, and asparagine 469. The region spanning 152 to 408 (LGLPDMVHQM…FINLGFECPD (257 aa)) is the ABC transporter 1 domain. 5 helical membrane-spanning segments follow: residues 513 to 533 (LLGSPGVTIFQLIANTAVAFI), 552 to 572 (GATLFLAVLSNAFASALEILT), 599 to 619 (ILVDMPYKITNSILFNVTLYF), 628 to 648 (GAFFFFLLVSFIMVLAMSGVF), and 662 to 682 (MVPASLLILALVIFAGFVVPV). Asparagine 714 is a glycosylation site (N-linked (GlcNAc...) asparagine). The chain crosses the membrane as a helical span at residues 773 to 793 (GILIAMTIFNHVVYIVATEFI). Positions 811–834 (PSKAKSDPEASSSRPIPTTEKNNN) are disordered. A compositionally biased stretch (polar residues) spans 819-834 (EASSSRPIPTTEKNNN). The ABC transporter 2 domain occupies 846-1088 (FHWNDVCYDI…TLTNYFVKHG (243 aa)). Residue 882–889 (GVSGAGKT) participates in ATP binding. The next 5 membrane-spanning stretches (helical) occupy residues 1190–1210 (ALCIQVGLFLGLVFLNAPLSL), 1218–1238 (FAIFQMLTVFGQLVQMQMPHF), 1269–1289 (IPWNTLMSVFLFVCIYYPVGF), 1307–1327 (WLLIWQFLIFTCTFAHAAIAI), and 1333–1353 (AGGNLANVVFMMSLFFCGVLA). Asparagine 1402 carries an N-linked (GlcNAc...) asparagine glycan. A helical membrane pass occupies residues 1457–1477 (GIGMVYIVVNIVGALFLYWLI).

It belongs to the ABC transporter superfamily. ABCG family. PDR (TC 3.A.1.205) subfamily.

It is found in the cell membrane. The protein resides in the vacuole membrane. In terms of biological role, ABC transporter involved in zearalenone production. The sequence is that of ZEB2-regulated ABC transporter 1 from Gibberella zeae (strain ATCC MYA-4620 / CBS 123657 / FGSC 9075 / NRRL 31084 / PH-1) (Wheat head blight fungus).